The following is a 343-amino-acid chain: Anthranilate phosphoribosyltransferase (343 aa).

Residues Gly-84, 87–88, Thr-92, 94–97, 112–120, and Ser-124 each bind 5-phospho-alpha-D-ribose 1-diphosphate; these read GD, NIST, and KHGNRGVSS. Position 84 (Gly-84) interacts with anthranilate. Ser-96 provides a ligand contact to Mg(2+). Asn-115 serves as a coordination point for anthranilate. Arg-170 lines the anthranilate pocket. The Mg(2+) site is built by Asp-229 and Glu-230.

Belongs to the anthranilate phosphoribosyltransferase family. As to quaternary structure, homodimer. Requires Mg(2+) as cofactor.

It catalyses the reaction N-(5-phospho-beta-D-ribosyl)anthranilate + diphosphate = 5-phospho-alpha-D-ribose 1-diphosphate + anthranilate. Its pathway is amino-acid biosynthesis; L-tryptophan biosynthesis; L-tryptophan from chorismate: step 2/5. Catalyzes the transfer of the phosphoribosyl group of 5-phosphorylribose-1-pyrophosphate (PRPP) to anthranilate to yield N-(5'-phosphoribosyl)-anthranilate (PRA). This is Anthranilate phosphoribosyltransferase from Burkholderia ambifaria (strain MC40-6).